The sequence spans 503 residues: Ent-kaurene oxidase-like 5 (503 aa).

A helical transmembrane segment spans residues 8–28 (GAGGIGVAAAAAVVAATLAVV). C448 contributes to the heme binding site.

The protein belongs to the cytochrome P450 family. Heme is required as a cofactor. Expressed in roots.

The protein resides in the membrane. Its function is as follows. May hydroxylate diterpenes. This Oryza sativa subsp. japonica (Rice) protein is Ent-kaurene oxidase-like 5.